Reading from the N-terminus, the 198-residue chain is MKYPDFTLENKLSGVIAGVDEVGRGPLAGPVISAAVVFIDRNTIIDGINDSKKLTPQCRQVLYEKIISVAKFGIGMASVEEINSYNILQATKLSMKRALIDLDLELDYVLVDGNQPPEVKWQVKSIVNGDNLSTSIAAASIVAKVTRDRLMQELHNKHPEYNWYKNKGYGTKEHLNAIGLYGITEHHRRNFAPISRAL.

An RNase H type-2 domain is found at glycine 14–leucine 198. Residues aspartate 20, glutamate 21, and aspartate 112 each contribute to the a divalent metal cation site.

Belongs to the RNase HII family. Mn(2+) serves as cofactor. Requires Mg(2+) as cofactor.

The protein localises to the cytoplasm. It catalyses the reaction Endonucleolytic cleavage to 5'-phosphomonoester.. In terms of biological role, endonuclease that specifically degrades the RNA of RNA-DNA hybrids. The polypeptide is Ribonuclease HII (Wolbachia sp. subsp. Drosophila simulans (strain wRi)).